Reading from the N-terminus, the 457-residue chain is Siroheme synthase (457 aa).

The tract at residues 1-204 (MDHLPIFCQL…NDQKAITETT (204 aa)) is precorrin-2 dehydrogenase /sirohydrochlorin ferrochelatase. NAD(+) is bound by residues 22–23 (DV) and 43–44 (LA). S128 is modified (phosphoserine). A uroporphyrinogen-III C-methyltransferase region spans residues 216–457 (GEVVLVGAGP…RDKLNWFSNH (242 aa)). P225 provides a ligand contact to S-adenosyl-L-methionine. D248 acts as the Proton acceptor in catalysis. Catalysis depends on K270, which acts as the Proton donor. Residues 301–303 (GGD), I306, 331–332 (TA), M382, and G411 contribute to the S-adenosyl-L-methionine site.

The protein in the N-terminal section; belongs to the precorrin-2 dehydrogenase / sirohydrochlorin ferrochelatase family. This sequence in the C-terminal section; belongs to the precorrin methyltransferase family.

It carries out the reaction uroporphyrinogen III + 2 S-adenosyl-L-methionine = precorrin-2 + 2 S-adenosyl-L-homocysteine + H(+). The catalysed reaction is precorrin-2 + NAD(+) = sirohydrochlorin + NADH + 2 H(+). It catalyses the reaction siroheme + 2 H(+) = sirohydrochlorin + Fe(2+). Its pathway is cofactor biosynthesis; adenosylcobalamin biosynthesis; precorrin-2 from uroporphyrinogen III: step 1/1. The protein operates within cofactor biosynthesis; adenosylcobalamin biosynthesis; sirohydrochlorin from precorrin-2: step 1/1. It participates in porphyrin-containing compound metabolism; siroheme biosynthesis; precorrin-2 from uroporphyrinogen III: step 1/1. It functions in the pathway porphyrin-containing compound metabolism; siroheme biosynthesis; siroheme from sirohydrochlorin: step 1/1. Its pathway is porphyrin-containing compound metabolism; siroheme biosynthesis; sirohydrochlorin from precorrin-2: step 1/1. In terms of biological role, multifunctional enzyme that catalyzes the SAM-dependent methylations of uroporphyrinogen III at position C-2 and C-7 to form precorrin-2 via precorrin-1. Then it catalyzes the NAD-dependent ring dehydrogenation of precorrin-2 to yield sirohydrochlorin. Finally, it catalyzes the ferrochelation of sirohydrochlorin to yield siroheme. This is Siroheme synthase from Escherichia coli (strain 55989 / EAEC).